The sequence spans 190 residues: Selenoprotein S (190 aa).

A helical transmembrane segment spans residues 28–48; the sequence is SLLASYGWYILFSCVLLYIVI. Residues 78 to 90 are VCP/p97-interacting motif (VIM); the sequence is RQEALAAARLRMQ. The segment at 96–190 is disordered; that stretch reads QVEKHKEKQR…RRGPSSGGUS (95 aa). Over residues 97-118 the composition is skewed to basic and acidic residues; that stretch reads VEKHKEKQRQLEEEKRRQKIEM. Over residues 160-174 the composition is skewed to gly residues; that stretch reads RGGGYNPLTGEGGGT. Residue selenocysteine 189 is a non-standard amino acid, selenocysteine.

It belongs to the selenoprotein S family. Interacts with DERL1 and (via VIM motif) with VCP, suggesting that it forms a membrane complex with DERL1 that serves as a receptor for VCP. Also interacts with DERL2, DERL3 and SELENOK. The SELENOK-SELENOS complex interacts with VCP. Interacts with CCDC47. Truncated SELENOS proteins produced by failed UGA/Sec decoding are ubiquitinated by the CRL2(KLHDC2) and CRL2(KLHDC3) complexes, which recognizes the glycine (Gly) at the C-terminus of truncated SELENOS proteins. Truncated SELENOS proteins produced by failed UGA/Sec decoding are also ubiquitinated by the CRL5(KLHDC1) complex.

The protein localises to the endoplasmic reticulum membrane. The protein resides in the cytoplasm. In terms of biological role, involved in the degradation process of misfolded endoplasmic reticulum (ER) luminal proteins. Participates in the transfer of misfolded proteins from the ER to the cytosol, where they are destroyed by the proteasome in a ubiquitin-dependent manner. Probably acts by serving as a linker between DERL1, which mediates the retrotranslocation of misfolded proteins into the cytosol, and the ATPase complex VCP, which mediates the translocation and ubiquitination. The polypeptide is Selenoprotein S (Rattus norvegicus (Rat)).